A 197-amino-acid polypeptide reads, in one-letter code: Imidazoleglycerol-phosphate dehydratase (197 aa).

The protein belongs to the imidazoleglycerol-phosphate dehydratase family.

It is found in the cytoplasm. It carries out the reaction D-erythro-1-(imidazol-4-yl)glycerol 3-phosphate = 3-(imidazol-4-yl)-2-oxopropyl phosphate + H2O. The protein operates within amino-acid biosynthesis; L-histidine biosynthesis; L-histidine from 5-phospho-alpha-D-ribose 1-diphosphate: step 6/9. This Rhodopseudomonas palustris (strain TIE-1) protein is Imidazoleglycerol-phosphate dehydratase.